A 702-amino-acid chain; its full sequence is Glucosidase 2 subunit beta (702 aa).

The first 20 residues, 1–20 (MVSMFSLFLLLIEQSPLVAS), serve as a signal peptide directing secretion. An N-linked (GlcNAc...) asparagine glycan is attached at Asn-145. Positions 163–228 (SYREGKEALE…LRGEYFNQLS (66 aa)) form a coiled coil. N-linked (GlcNAc...) asparagine glycosylation is found at Asn-240 and Asn-358. Residues 435–457 (PKVLPPDAVESEQDTNSDHIGTS) are disordered. A coiled-coil region spans residues 478–517 (KDLVSLEKRFRSCESQVSLLENELKQKMDYKKLLDETEDE). Asn-520 and Asn-525 each carry an N-linked (GlcNAc...) asparagine glycan. One can recognise an MRH domain in the interval 537–689 (SYCLDDILDN…DVVGPLGCNK (153 aa)). 3 cysteine pairs are disulfide-bonded: Cys-539–Cys-552, Cys-646–Cys-675, and Cys-660–Cys-687. N-linked (GlcNAc...) asparagine glycosylation is found at Asn-688 and Asn-699.

As to quaternary structure, heterodimer of a catalytic subunit alpha (ROT2) and a subunit beta (GTB1).

Its subcellular location is the endoplasmic reticulum. In terms of biological role, subunit of glucosidase 2, which cleaves sequentially the 2 innermost alpha-1,3-linked glucose residues from the Glc(2)Man(9)GlcNAc(2) oligosaccharide precursor of immature glycoproteins. Specifically required for the cleavage of the final glucose. The polypeptide is Glucosidase 2 subunit beta (GTB1) (Saccharomyces cerevisiae (strain ATCC 204508 / S288c) (Baker's yeast)).